The following is a 294-amino-acid chain: MHPRFETAFAQLPAALQAALAPLIADTYFPAMLSAEQVADVRRQSGLDDDALAFALLPLAAACAQTEISHFNVGAVARGLSGNLYFGGNMEFRGAAMQQTIHAEQSAITHAWMRGETGLAAITVNYTPCGHCRQFMNELNSGLTLRINLPGRAPSQLGDYLPDAFGPRDLDIKTLIFDTENHGYALKGDALTQAAIAAANRSHAPYSQSPSGLAIETRDGEIFTGSYAENAAFNPSLPPLQAALNLMSLNGYAWADIKRVALAERDDATIVQRDATAATLKALGFTNLELVTLA.

CMP/dCMP-type deaminase domains are found at residues 48-168 (DDDA…FGPR) and 186-294 (LKGD…VTLA). A substrate-binding site is contributed by 89 to 91 (NME). Residue histidine 102 participates in Zn(2+) binding. Catalysis depends on glutamate 104, which acts as the Proton donor. Zn(2+) contacts are provided by cysteine 129 and cysteine 132.

Belongs to the cytidine and deoxycytidylate deaminase family. In terms of assembly, homodimer. Requires Zn(2+) as cofactor.

It carries out the reaction cytidine + H2O + H(+) = uridine + NH4(+). The enzyme catalyses 2'-deoxycytidine + H2O + H(+) = 2'-deoxyuridine + NH4(+). Its function is as follows. This enzyme scavenges exogenous and endogenous cytidine and 2'-deoxycytidine for UMP synthesis. This Cronobacter sakazakii (strain ATCC BAA-894) (Enterobacter sakazakii) protein is Cytidine deaminase.